The primary structure comprises 127 residues: Large-conductance mechanosensitive channel (127 aa).

A run of 3 helical transmembrane segments spans residues 9 to 29, 32 to 52, and 75 to 95; these read EFAM…GVAF, IVTA…LGGV, and VIDF…INLL.

It belongs to the MscL family. In terms of assembly, homopentamer.

It is found in the cell inner membrane. Its function is as follows. Channel that opens in response to stretch forces in the membrane lipid bilayer. May participate in the regulation of osmotic pressure changes within the cell. This is Large-conductance mechanosensitive channel from Legionella pneumophila (strain Corby).